A 266-amino-acid chain; its full sequence is Undecaprenyl-diphosphatase (266 aa).

Transmembrane regions (helical) follow at residues 4–24 (WVLA…PVSS), 41–61 (GKVF…SVYF), 80–100 (FVAS…LLHD), 105–125 (VLFE…FALL), 139–159 (AGAF…LALI), 182–202 (AAEF…TVDL), 212–232 (DDAG…IITV), and 245–265 (APFA…LAFI).

The protein belongs to the UppP family.

Its subcellular location is the cell inner membrane. The catalysed reaction is di-trans,octa-cis-undecaprenyl diphosphate + H2O = di-trans,octa-cis-undecaprenyl phosphate + phosphate + H(+). In terms of biological role, catalyzes the dephosphorylation of undecaprenyl diphosphate (UPP). Confers resistance to bacitracin. This Phenylobacterium zucineum (strain HLK1) protein is Undecaprenyl-diphosphatase.